The chain runs to 31 residues: Cytochrome b6-f complex subunit 6 (31 aa).

The chain crosses the membrane as a helical span at residues 4–24 (ITSYFGFLLVALTITSALFIG).

It belongs to the PetL family. As to quaternary structure, the 4 large subunits of the cytochrome b6-f complex are cytochrome b6, subunit IV (17 kDa polypeptide, PetD), cytochrome f and the Rieske protein, while the 4 small subunits are PetG, PetL, PetM and PetN. The complex functions as a dimer.

It localises to the plastid. Its subcellular location is the chloroplast thylakoid membrane. Component of the cytochrome b6-f complex, which mediates electron transfer between photosystem II (PSII) and photosystem I (PSI), cyclic electron flow around PSI, and state transitions. PetL is important for photoautotrophic growth as well as for electron transfer efficiency and stability of the cytochrome b6-f complex. This chain is Cytochrome b6-f complex subunit 6, found in Panax ginseng (Korean ginseng).